The chain runs to 465 residues: Probable Xaa-Pro aminopeptidase pepP (465 aa).

Residues D263, D274, E397, and E437 each contribute to the Mn(2+) site.

Belongs to the peptidase M24B family. Mn(2+) serves as cofactor.

The catalysed reaction is Release of any N-terminal amino acid, including proline, that is linked to proline, even from a dipeptide or tripeptide.. Functionally, catalyzes the removal of a penultimate prolyl residue from the N-termini of peptides. This is Probable Xaa-Pro aminopeptidase pepP (pepP) from Emericella nidulans (strain FGSC A4 / ATCC 38163 / CBS 112.46 / NRRL 194 / M139) (Aspergillus nidulans).